The chain runs to 66 residues: UPF0337 protein BP1738 (66 aa).

Belongs to the UPF0337 (CsbD) family.

This chain is UPF0337 protein BP1738, found in Bordetella pertussis (strain Tohama I / ATCC BAA-589 / NCTC 13251).